A 311-amino-acid polypeptide reads, in one-letter code: ADP-L-glycero-D-manno-heptose-6-epimerase (311 aa).

Residues 10–11, 31–32, Lys38, Lys53, 75–79, and Asn92 each bind NADP(+); these read FI, DD, and EGACS. Tyr139 functions as the Proton acceptor in the catalytic mechanism. An NADP(+)-binding site is contributed by Lys143. Asn174 contacts substrate. NADP(+)-binding residues include Val175 and Lys183. Lys183 acts as the Proton acceptor in catalysis. Substrate contacts are provided by residues Ser185, His192, 206–209, Arg212, and Tyr275; that span reads FEGE.

This sequence belongs to the NAD(P)-dependent epimerase/dehydratase family. HldD subfamily. Homopentamer. NADP(+) is required as a cofactor.

It catalyses the reaction ADP-D-glycero-beta-D-manno-heptose = ADP-L-glycero-beta-D-manno-heptose. The protein operates within nucleotide-sugar biosynthesis; ADP-L-glycero-beta-D-manno-heptose biosynthesis; ADP-L-glycero-beta-D-manno-heptose from D-glycero-beta-D-manno-heptose 7-phosphate: step 4/4. In terms of biological role, catalyzes the interconversion between ADP-D-glycero-beta-D-manno-heptose and ADP-L-glycero-beta-D-manno-heptose via an epimerization at carbon 6 of the heptose. This chain is ADP-L-glycero-D-manno-heptose-6-epimerase, found in Psychromonas ingrahamii (strain DSM 17664 / CCUG 51855 / 37).